The chain runs to 281 residues: Bifunctional protein FolD (281 aa).

NADP(+) contacts are provided by residues 159 to 161, Ser-184, and Ile-225; that span reads NRS.

The protein belongs to the tetrahydrofolate dehydrogenase/cyclohydrolase family. In terms of assembly, homodimer.

It carries out the reaction (6R)-5,10-methylene-5,6,7,8-tetrahydrofolate + NADP(+) = (6R)-5,10-methenyltetrahydrofolate + NADPH. It catalyses the reaction (6R)-5,10-methenyltetrahydrofolate + H2O = (6R)-10-formyltetrahydrofolate + H(+). It functions in the pathway one-carbon metabolism; tetrahydrofolate interconversion. Catalyzes the oxidation of 5,10-methylenetetrahydrofolate to 5,10-methenyltetrahydrofolate and then the hydrolysis of 5,10-methenyltetrahydrofolate to 10-formyltetrahydrofolate. This chain is Bifunctional protein FolD, found in Thermoplasma volcanium (strain ATCC 51530 / DSM 4299 / JCM 9571 / NBRC 15438 / GSS1).